Consider the following 124-residue polypeptide: MGCCQDKDFEMSDEQSKEEESEDGREDETTDTQRGPRECERGLPEGRGELRGLVVPSGAEDIDLNSPDHPNHKSNESLLITVLWRRLSTFGRRGSSRPSKRQPDQIRKQESPIREGNQEEPEKG.

Residues 1 to 10 show a composition bias toward basic and acidic residues; it reads MGCCQDKDFE. Disordered regions lie at residues 1-77 and 90-124; these read MGCC…SNES and FGRRGSSRPSKRQPDQIRKQESPIREGNQEEPEKG. The span at 11–30 shows a compositional bias: acidic residues; the sequence is MSDEQSKEEESEDGREDETT. Composition is skewed to basic and acidic residues over residues 34 to 50 and 101 to 124; these read RGPRECERGLPEGRGEL and RQPDQIRKQESPIREGNQEEPEKG.

In terms of tissue distribution, expressed in Testis.

This is Testis-expressed protein 54 from Homo sapiens (Human).